The following is a 304-amino-acid chain: Ribosomal protein L11 methyltransferase (304 aa).

The S-adenosyl-L-methionine site is built by Thr155, Gly176, Asp198, and Asn239.

It belongs to the methyltransferase superfamily. PrmA family.

It is found in the cytoplasm. The catalysed reaction is L-lysyl-[protein] + 3 S-adenosyl-L-methionine = N(6),N(6),N(6)-trimethyl-L-lysyl-[protein] + 3 S-adenosyl-L-homocysteine + 3 H(+). Functionally, methylates ribosomal protein L11. The chain is Ribosomal protein L11 methyltransferase from Caldicellulosiruptor bescii (strain ATCC BAA-1888 / DSM 6725 / KCTC 15123 / Z-1320) (Anaerocellum thermophilum).